Here is an 81-residue protein sequence, read N- to C-terminus: Defensin-like protein 115 (81 aa).

Residues 1 to 24 (MAITKKMLVVFLLAFLFVTSSVHC) form the signal peptide. Intrachain disulfides connect Cys-40–Cys-78, Cys-46–Cys-69, Cys-54–Cys-76, and Cys-58–Cys-77.

The protein belongs to the DEFL family.

The protein resides in the secreted. The chain is Defensin-like protein 115 from Arabidopsis thaliana (Mouse-ear cress).